Here is a 164-residue protein sequence, read N- to C-terminus: Phosphopantetheine adenylyltransferase (164 aa).

S9 contacts substrate. ATP contacts are provided by residues 9–10 (SF) and H17. K41, L73, and K87 together coordinate substrate. ATP contacts are provided by residues 88–90 (GLR), E98, and 123–129 (YSYISSS).

It belongs to the bacterial CoaD family. As to quaternary structure, homohexamer. Mg(2+) is required as a cofactor.

It is found in the cytoplasm. The enzyme catalyses (R)-4'-phosphopantetheine + ATP + H(+) = 3'-dephospho-CoA + diphosphate. It participates in cofactor biosynthesis; coenzyme A biosynthesis; CoA from (R)-pantothenate: step 4/5. In terms of biological role, reversibly transfers an adenylyl group from ATP to 4'-phosphopantetheine, yielding dephospho-CoA (dPCoA) and pyrophosphate. In Clostridium perfringens (strain SM101 / Type A), this protein is Phosphopantetheine adenylyltransferase.